The chain runs to 187 residues: Calcium and integrin-binding family member 2 (187 aa).

EF-hand domains lie at 66–101, 103–138, and 144–179; these read RENP…LCES, PREL…LTKS, and EVVL…APDF. Asp116, Asn118, Asp120, Asp127, Asp157, Asp159, Asp161, Lys163, and Asp168 together coordinate Ca(2+).

As to quaternary structure, monomer. Homodimer. Interacts with WHRN and MYO7A. Interacts with ITGA2B (via C-terminus cytoplasmic tail region); this interaction is stabilized/increased in a calcium and magnesium-dependent manner. Interacts with ITGA7 (via C-terminus cytoplasmic tail region); this interaction is stabilized/increased in a calcium and magnesium-dependent manner. Interacts with TMC1. Interacts with TMC2. Interacts with PIEZO1. In terms of tissue distribution, expressed in inner and outer segments of photoreceptor cells, as well as in the pigmented epithelium. Also observed in the inner and outer plexiform layers and in the ganglion cell layer (at protein level). Expressed in sensory hair cell stereocilia, with expression mainly at the basal body of the kinocilium and in the hair bundle stereocilia; and the apical surface of hair cells (at protein level). Located in the tip region of the stereocilia and at the apical surface of hair cells around the cuticular plate (at protein level). Not expressed in the hair bundles of the vestibular hair cells. Strongly expressed in skeletal muscles, brain, kidney and liver. Expressed in the skeletal muscle, retina and cochlea. Expressed in megakaryocytes and endothelial cells. Expressed in heart, spleen, lung, and inner ear. In the inner ear, expressed in the vestibule, basilar membrane and spiral ganglion cells. Expressed in the supporting cells in both the organ of Corti and the vestibular sensory epithelia.

It is found in the cytoplasm. The protein resides in the cell projection. It localises to the stereocilium. Its subcellular location is the photoreceptor inner segment. The protein localises to the cilium. It is found in the photoreceptor outer segment. The protein resides in the cell membrane. It localises to the sarcolemma. In terms of biological role, calcium- and integrin-binding protein that plays a role in intracellular calcium homeostasis. Acts as an auxiliary subunit of the sensory mechanoelectrical transduction (MET) channel in hair cells. Essential for mechanoelectrical transduction (MET) currents in auditory hair cells and thereby required for hearing. Regulates the function of hair cell mechanotransduction by controlling the distribution of transmembrane channel-like proteins TMC1 and TMC2, and by regulating the function of the MET channels in hair cells. Required for the maintenance of auditory hair cell stereocilia bundle morphology and function and for hair-cell survival in the cochlea. Critical for proper photoreceptor cell maintenance and function. Plays a role in intracellular calcium homeostasis by decreasing ATP-induced calcium release. Seems to be dispensable for vestibular functions. The sequence is that of Calcium and integrin-binding family member 2 (Cib2) from Mus musculus (Mouse).